Reading from the N-terminus, the 260-residue chain is Transcriptional activator protein AsaR (260 aa).

The region spanning 176 to 241 (EDDPQEALTD…QAIAKGVSSG (66 aa)) is the HTH luxR-type domain. The H-T-H motif DNA-binding region spans 200-219 (SGEIACILGITERTVNYHLN).

This sequence belongs to the autoinducer-regulated transcriptional regulatory protein family.

Functionally, functions as a BHL-responsive transcriptional regulator. The chain is Transcriptional activator protein AsaR from Aeromonas salmonicida.